The sequence spans 1039 residues: 3',5'-cyclic-AMP phosphodiesterase 4 (1039 aa).

An N-terminal signal peptide occupies residues 1 to 29 (MFNNNNNDKINNTMMSNNPSGQIINLESI). Residues N11, N34, and N37 are each glycosylated (N-linked (GlcNAc...) asparagine). The Extracellular segment spans residues 30–201 (DCNSNLSNTT…KKKVNAESLR (172 aa)). Disordered stretches follow at residues 40-63 (SIKD…NNIN) and 116-181 (IIPN…NNSI). Residues 45–63 (NNNNNNNNNNNNNINNNIN) show a composition bias toward low complexity. 5 N-linked (GlcNAc...) asparagine glycosylation sites follow: N119, N124, N131, N167, and N178. Residues 202-222 (GPIIFQNFILYTFFLIVIGTA) form a helical membrane-spanning segment. At 223 to 226 (EGTS) the chain is on the cytoplasmic side. The chain crosses the membrane as a helical span at residues 227–247 (WAPEIRVANFVPYCVMCVVLL). At 248-256 (EFNRLHKKP) the chain is on the extracellular side. The helical transmembrane segment at 257–277 (LLRIIFPLYTSNIPFAYMCIF) threads the bilayer. Over 278-283 (SREARK) the chain is Cytoplasmic. The helical transmembrane segment at 284–304 (YVLISLLFFASCLCIFLQSGI) threads the bilayer. At 305–310 (PDLRKH) the chain is on the extracellular side. Residues 311 to 331 (IVIFCIIFMINYGCCILFMDW) traverse the membrane as a helical segment. Topologically, residues 332 to 356 (FYIDTTGTKPYRGRILATKIHWGEE) are cytoplasmic. Residues 357 to 377 (ATILVSMALLGCIFIVLEKFI) traverse the membrane as a helical segment. Topologically, residues 378-1039 (KSYARCVAEQ…LTQSNYLIVV (662 aa)) are extracellular. Residues 384 to 414 (VAEQHYQIQCLQKEKEKLQTEINISLKKLDL) are a coiled coil. 4 N-linked (GlcNAc...) asparagine glycosylation sites follow: N406, N430, N500, and N515. The region spanning 533-973 (PEITDQGIQE…QQLQQQQQQQ (441 aa)) is the PDEase domain. The active-site Proton donor is H609. The a divalent metal cation site is built by H613, H648, and D649. The interval 738–835 (FPTTTNTQQP…NNSNSNNQNQ (98 aa)) is disordered. The segment covering 740-835 (TTTNTQQPSS…NNSNSNNQNQ (96 aa)) has biased composition (low complexity). N-linked (GlcNAc...) asparagine glycans are attached at residues N769, N791, N795, N804, N809, N823, and N826. D861 provides a ligand contact to a divalent metal cation. N-linked (GlcNAc...) asparagine glycans are attached at residues N874, N944, N1018, and N1023. Positions 978–1019 (QQQQQQLHHHQQQQQFQHQQHQQQLQHQHQQQLNNQNQNQNQ) are enriched in low complexity. Residues 978-1033 (QQQQQQLHHHQQQQQFQHQQHQQQLQHQHQQQLNNQNQNQNQSNSNNSNSFGLTQS) are disordered. Over residues 1020 to 1033 (SNSNNSNSFGLTQS) the composition is skewed to polar residues.

It belongs to the cyclic nucleotide phosphodiesterase family. A divalent metal cation serves as cofactor.

Its subcellular location is the cell membrane. It carries out the reaction 3',5'-cyclic AMP + H2O = AMP + H(+). Its activity is regulated as follows. Inhibited by 3-isobutyl-1-methylxanthine (IBMX). Phosphodiesterase specific for extracellular cAMP. Involved in the degradation of extracellular cAMP specifically during multicellular development. This chain is 3',5'-cyclic-AMP phosphodiesterase 4 (Pde4), found in Dictyostelium discoideum (Social amoeba).